Here is a 386-residue protein sequence, read N- to C-terminus: Methionine aminopeptidase 1 (386 aa).

An N-acetylalanine modification is found at A2. Residues 6 to 59 (TRVCETDGCSSEAKLQCPTCIKLGIQGSYFCSQECFKGSWATHKLLHKKAKDEK) form a C6H2-type zinc finger. Zn(2+) contacts are provided by C9, C14, C22, C25, C36, C40, H48, and H52. H203 is a binding site for a protein. Zn(2+)-binding residues include D220, D231, and H294. An a protein-binding site is contributed by H301. The Zn(2+) site is built by E327 and E358.

The protein belongs to the peptidase M24A family. Methionine aminopeptidase type 1 subfamily. In terms of assembly, associates with the 60S ribosomal subunit of the 80S translational complex. It depends on Zn(2+) as a cofactor. Co(2+) is required as a cofactor. Mn(2+) serves as cofactor. The cofactor is Fe(2+).

It localises to the cytoplasm. It carries out the reaction Release of N-terminal amino acids, preferentially methionine, from peptides and arylamides.. Its function is as follows. Cotranslationally removes the N-terminal methionine from nascent proteins. The N-terminal methionine is often cleaved when the second residue in the primary sequence is small and uncharged (Met-Ala-, Cys, Gly, Pro, Ser, Thr, or Val). The sequence is that of Methionine aminopeptidase 1 (METAP1) from Pongo abelii (Sumatran orangutan).